We begin with the raw amino-acid sequence, 293 residues long: NAD kinase (293 aa).

Catalysis depends on aspartate 68, which acts as the Proton acceptor. NAD(+)-binding positions include aspartate 68 to glycine 69, asparagine 142 to aspartate 143, arginine 153, aspartate 172, and threonine 183 to serine 188.

It belongs to the NAD kinase family. The cofactor is a divalent metal cation.

It is found in the cytoplasm. It catalyses the reaction NAD(+) + ATP = ADP + NADP(+) + H(+). Functionally, involved in the regulation of the intracellular balance of NAD and NADP, and is a key enzyme in the biosynthesis of NADP. Catalyzes specifically the phosphorylation on 2'-hydroxyl of the adenosine moiety of NAD to yield NADP. The protein is NAD kinase of Lachnospira eligens (strain ATCC 27750 / DSM 3376 / VPI C15-48 / C15-B4) (Eubacterium eligens).